An 87-amino-acid chain; its full sequence is Large ribosomal subunit protein bL31B (87 aa).

Belongs to the bacterial ribosomal protein bL31 family. Type B subfamily. In terms of assembly, part of the 50S ribosomal subunit.

The sequence is that of Large ribosomal subunit protein bL31B from Ralstonia nicotianae (strain ATCC BAA-1114 / GMI1000) (Ralstonia solanacearum).